We begin with the raw amino-acid sequence, 308 residues long: Cytochrome b (308 aa).

4 helical membrane passes run 1–21, 45–66, 81–101, and 146–166; these read FGSL…LLAM, WLIR…YFHI, WNIG…GYVL, and FFAL…VHLT. Heme b is bound by residues H51 and H65. 2 residues coordinate heme b: H150 and H164. Residue H169 coordinates a ubiquinone. The next 3 helical transmembrane spans lie at 194-214, 256-276, and 288-308; these read TKDI…ALFS, LGGV…PLLH, and LSQI…WVGS.

Belongs to the cytochrome b family. As to quaternary structure, the cytochrome bc1 complex contains 11 subunits: 3 respiratory subunits (MT-CYB, CYC1 and UQCRFS1), 2 core proteins (UQCRC1 and UQCRC2) and 6 low-molecular weight proteins (UQCRH/QCR6, UQCRB/QCR7, UQCRQ/QCR8, UQCR10/QCR9, UQCR11/QCR10 and a cleavage product of UQCRFS1). This cytochrome bc1 complex then forms a dimer. Heme b is required as a cofactor.

It localises to the mitochondrion inner membrane. In terms of biological role, component of the ubiquinol-cytochrome c reductase complex (complex III or cytochrome b-c1 complex) that is part of the mitochondrial respiratory chain. The b-c1 complex mediates electron transfer from ubiquinol to cytochrome c. Contributes to the generation of a proton gradient across the mitochondrial membrane that is then used for ATP synthesis. This is Cytochrome b (MT-CYB) from Baeolophus inornatus (Oak titmouse).